The following is a 325-amino-acid chain: Heat-inducible transcription repressor HrcA (325 aa).

It belongs to the HrcA family.

Negative regulator of class I heat shock genes (grpE-dnaK-dnaJ and groELS operons). Prevents heat-shock induction of these operons. In Staphylococcus aureus (strain bovine RF122 / ET3-1), this protein is Heat-inducible transcription repressor HrcA.